Reading from the N-terminus, the 262-residue chain is MIDKTAVIHPSSIVEEGAVIGAGVHIGPFCFVGSQVEIGAGTELKSHVVVNGITKIGCDNQIYQFASIGEANQDLKYAGEPTRVEIGDRNRIRESVSIHRGTVQGGGLSKVGSDNLLMINAHIAHDCIIGDRCILANNATLGGHVEIDDFAIIGGMTAIHQFCVIGAHVMVGGCSGVAQDVPPFVIAQGNHATPFGINIEGLKRRGFDKESLHAIRNAYKLLYRSGRTLDEVKPEIAELADQHPAVQAFIDFFARSTRGIIR.

It belongs to the transferase hexapeptide repeat family. LpxA subfamily. In terms of assembly, homotrimer.

The protein localises to the cytoplasm. It catalyses the reaction a (3R)-hydroxyacyl-[ACP] + UDP-N-acetyl-alpha-D-glucosamine = a UDP-3-O-[(3R)-3-hydroxyacyl]-N-acetyl-alpha-D-glucosamine + holo-[ACP]. It participates in glycolipid biosynthesis; lipid IV(A) biosynthesis; lipid IV(A) from (3R)-3-hydroxytetradecanoyl-[acyl-carrier-protein] and UDP-N-acetyl-alpha-D-glucosamine: step 1/6. Functionally, involved in the biosynthesis of lipid A, a phosphorylated glycolipid that anchors the lipopolysaccharide to the outer membrane of the cell. The sequence is that of Acyl-[acyl-carrier-protein]--UDP-N-acetylglucosamine O-acyltransferase from Yersinia enterocolitica.